Consider the following 576-residue polypeptide: 2-succinyl-5-enolpyruvyl-6-hydroxy-3-cyclohexene-1-carboxylate synthase (576 aa).

It belongs to the TPP enzyme family. MenD subfamily. Homodimer. It depends on Mg(2+) as a cofactor. Mn(2+) serves as cofactor. Requires thiamine diphosphate as cofactor.

It catalyses the reaction isochorismate + 2-oxoglutarate + H(+) = 5-enolpyruvoyl-6-hydroxy-2-succinyl-cyclohex-3-ene-1-carboxylate + CO2. Its pathway is quinol/quinone metabolism; 1,4-dihydroxy-2-naphthoate biosynthesis; 1,4-dihydroxy-2-naphthoate from chorismate: step 2/7. It participates in quinol/quinone metabolism; menaquinone biosynthesis. In terms of biological role, catalyzes the thiamine diphosphate-dependent decarboxylation of 2-oxoglutarate and the subsequent addition of the resulting succinic semialdehyde-thiamine pyrophosphate anion to isochorismate to yield 2-succinyl-5-enolpyruvyl-6-hydroxy-3-cyclohexene-1-carboxylate (SEPHCHC). In Photobacterium profundum (strain SS9), this protein is 2-succinyl-5-enolpyruvyl-6-hydroxy-3-cyclohexene-1-carboxylate synthase.